The chain runs to 275 residues: Lectin (275 aa).

An N-terminal signal peptide occupies residues 1–30 (MASLQTQMISFYLIFLSILLTTIFFFKVNS). Residues Asp-111 and Gly-129 each contribute to the D-glucose site. Residues Glu-149 and Asp-151 each coordinate Mn(2+). The Ca(2+) site is built by Asp-151, Phe-153, Asn-155, and Asp-159. Mn(2+) contacts are provided by Asp-159 and His-166. Positions 211-217 (NSLEEEN) are excised as a propeptide. D-glucose is bound by residues Gly-246 and Ala-247. The propeptide occupies 270 to 275 (KQAADA).

The protein belongs to the leguminous lectin family. Heterotetramer of two alpha and two beta chains. Post-translationally, the mature form consists of two chains, alpha and beta, produced by cleavage of the immature protein. These remain cleaved, yet fold together to form one subunit.

D-mannose specific lectin. The sequence is that of Lectin from Lens culinaris subsp. orientalis (Oriental wild lentil).